Reading from the N-terminus, the 436-residue chain is Enolase (436 aa).

Position 167 (Gln-167) interacts with (2R)-2-phosphoglycerate. The active-site Proton donor is Glu-209. 3 residues coordinate Mg(2+): Asp-246, Glu-291, and Asp-318. Residues Lys-343, Arg-372, Ser-373, and Lys-394 each contribute to the (2R)-2-phosphoglycerate site. Residue Lys-343 is the Proton acceptor of the active site.

The protein belongs to the enolase family. As to quaternary structure, component of the RNA degradosome, a multiprotein complex involved in RNA processing and mRNA degradation. It depends on Mg(2+) as a cofactor.

Its subcellular location is the cytoplasm. The protein localises to the secreted. The protein resides in the cell surface. The catalysed reaction is (2R)-2-phosphoglycerate = phosphoenolpyruvate + H2O. It participates in carbohydrate degradation; glycolysis; pyruvate from D-glyceraldehyde 3-phosphate: step 4/5. Functionally, catalyzes the reversible conversion of 2-phosphoglycerate (2-PG) into phosphoenolpyruvate (PEP). It is essential for the degradation of carbohydrates via glycolysis. The chain is Enolase from Glaesserella parasuis serovar 5 (strain SH0165) (Haemophilus parasuis).